The primary structure comprises 100 residues: Small ribosomal subunit protein uS14c (100 aa).

The protein belongs to the universal ribosomal protein uS14 family. As to quaternary structure, part of the 30S ribosomal subunit.

The protein localises to the plastid. It is found in the chloroplast. In terms of biological role, binds 16S rRNA, required for the assembly of 30S particles. The sequence is that of Small ribosomal subunit protein uS14c from Ostreococcus tauri.